We begin with the raw amino-acid sequence, 159 residues long: MNIDIVCVGRIKERYLTDAIAEYSKRLSRYCKLNIIEVADEKTPEHASEGVGRQIKAKEGERIAKHLKDGAFVIALAINGKQLSSEELAAKINDLGLRGTSHIQLVIGGSIGLDDAILRRADFLLSFSKMTFPHQLMRVILLEQIYRAYKINAHEPYHK.

Residues Leu-76, Gly-108, and 127–132 (FSKMTF) each bind S-adenosyl-L-methionine.

This sequence belongs to the RNA methyltransferase RlmH family. In terms of assembly, homodimer.

The protein resides in the cytoplasm. It carries out the reaction pseudouridine(1915) in 23S rRNA + S-adenosyl-L-methionine = N(3)-methylpseudouridine(1915) in 23S rRNA + S-adenosyl-L-homocysteine + H(+). Functionally, specifically methylates the pseudouridine at position 1915 (m3Psi1915) in 23S rRNA. This Bifidobacterium longum subsp. infantis (strain ATCC 15697 / DSM 20088 / JCM 1222 / NCTC 11817 / S12) protein is Ribosomal RNA large subunit methyltransferase H.